The primary structure comprises 271 residues: Formamidopyrimidine-DNA glycosylase (271 aa).

The active-site Schiff-base intermediate with DNA is the P2. E3 acts as the Proton donor in catalysis. K58 (proton donor; for beta-elimination activity) is an active-site residue. DNA is bound by residues H92, R111, and R152. The FPG-type zinc finger occupies 237 to 271 (SVYGREGEACKQCGRVLKHATIGQRATVWCGSCQR). R261 acts as the Proton donor; for delta-elimination activity in catalysis.

This sequence belongs to the FPG family. As to quaternary structure, monomer. Zn(2+) is required as a cofactor.

It carries out the reaction Hydrolysis of DNA containing ring-opened 7-methylguanine residues, releasing 2,6-diamino-4-hydroxy-5-(N-methyl)formamidopyrimidine.. It catalyses the reaction 2'-deoxyribonucleotide-(2'-deoxyribose 5'-phosphate)-2'-deoxyribonucleotide-DNA = a 3'-end 2'-deoxyribonucleotide-(2,3-dehydro-2,3-deoxyribose 5'-phosphate)-DNA + a 5'-end 5'-phospho-2'-deoxyribonucleoside-DNA + H(+). Its function is as follows. Involved in base excision repair of DNA damaged by oxidation or by mutagenic agents. Acts as a DNA glycosylase that recognizes and removes damaged bases. Has a preference for oxidized purines, such as 7,8-dihydro-8-oxoguanine (8-oxoG). Has AP (apurinic/apyrimidinic) lyase activity and introduces nicks in the DNA strand. Cleaves the DNA backbone by beta-delta elimination to generate a single-strand break at the site of the removed base with both 3'- and 5'-phosphates. This is Formamidopyrimidine-DNA glycosylase from Xanthomonas euvesicatoria pv. vesicatoria (strain 85-10) (Xanthomonas campestris pv. vesicatoria).